The primary structure comprises 151 residues: Small ribosomal subunit protein uS19 (151 aa).

This sequence belongs to the universal ribosomal protein uS19 family.

Its function is as follows. Protein S19 forms a complex with S13 that binds strongly to the 16S ribosomal RNA. The chain is Small ribosomal subunit protein uS19 from Picrophilus torridus (strain ATCC 700027 / DSM 9790 / JCM 10055 / NBRC 100828 / KAW 2/3).